The sequence spans 333 residues: MNIAAKPPLTIRLCGPRGFCAGVDRAIQIVVLALKSYGAPVYVRHEIVHNRYVVEGLEAKGAVFVEELDEIPAEHRAQPVVFSAHGVPKSVPEDAASRNLFYLDATCPLVSKVHKQAMRHNRLGRHVVLIGHAGHPEVIGTMGQLPEGSVSLIETIEDADAYAPADPDNLGYVTQTTLSVDDTAGVIARLQQRFPNLTAPAADSICYATTNRQEVVKQAAPGCDLFIIVGAPNSSNSKRLVEVALRAGAKKSILVQRAAELDWDEIGAISTLGLSAGASAPEVIVNEIIEAFRARFDARVELAETVQETENFLVNRELRSIELTAADMAFVNG.

Cysteine 20 provides a ligand contact to [4Fe-4S] cluster. Histidine 49 and histidine 85 together coordinate (2E)-4-hydroxy-3-methylbut-2-enyl diphosphate. Dimethylallyl diphosphate contacts are provided by histidine 49 and histidine 85. Positions 49 and 85 each coordinate isopentenyl diphosphate. Cysteine 107 serves as a coordination point for [4Fe-4S] cluster. (2E)-4-hydroxy-3-methylbut-2-enyl diphosphate is bound at residue histidine 135. Histidine 135 provides a ligand contact to dimethylallyl diphosphate. Histidine 135 provides a ligand contact to isopentenyl diphosphate. Glutamate 137 acts as the Proton donor in catalysis. Threonine 176 serves as a coordination point for (2E)-4-hydroxy-3-methylbut-2-enyl diphosphate. A [4Fe-4S] cluster-binding site is contributed by cysteine 206. The (2E)-4-hydroxy-3-methylbut-2-enyl diphosphate site is built by serine 234, serine 235, asparagine 236, and serine 279. Dimethylallyl diphosphate is bound by residues serine 234, serine 235, asparagine 236, and serine 279. Isopentenyl diphosphate contacts are provided by serine 234, serine 235, asparagine 236, and serine 279.

The protein belongs to the IspH family. It depends on [4Fe-4S] cluster as a cofactor.

The catalysed reaction is isopentenyl diphosphate + 2 oxidized [2Fe-2S]-[ferredoxin] + H2O = (2E)-4-hydroxy-3-methylbut-2-enyl diphosphate + 2 reduced [2Fe-2S]-[ferredoxin] + 2 H(+). The enzyme catalyses dimethylallyl diphosphate + 2 oxidized [2Fe-2S]-[ferredoxin] + H2O = (2E)-4-hydroxy-3-methylbut-2-enyl diphosphate + 2 reduced [2Fe-2S]-[ferredoxin] + 2 H(+). The protein operates within isoprenoid biosynthesis; dimethylallyl diphosphate biosynthesis; dimethylallyl diphosphate from (2E)-4-hydroxy-3-methylbutenyl diphosphate: step 1/1. Its pathway is isoprenoid biosynthesis; isopentenyl diphosphate biosynthesis via DXP pathway; isopentenyl diphosphate from 1-deoxy-D-xylulose 5-phosphate: step 6/6. In terms of biological role, catalyzes the conversion of 1-hydroxy-2-methyl-2-(E)-butenyl 4-diphosphate (HMBPP) into a mixture of isopentenyl diphosphate (IPP) and dimethylallyl diphosphate (DMAPP). Acts in the terminal step of the DOXP/MEP pathway for isoprenoid precursor biosynthesis. This chain is 4-hydroxy-3-methylbut-2-enyl diphosphate reductase, found in Rhizobium etli (strain CIAT 652).